The sequence spans 111 residues: Ribonuclease P protein component (111 aa).

This sequence belongs to the RnpA family. In terms of assembly, consists of a catalytic RNA component (M1 or rnpB) and a protein subunit.

It catalyses the reaction Endonucleolytic cleavage of RNA, removing 5'-extranucleotides from tRNA precursor.. In terms of biological role, RNaseP catalyzes the removal of the 5'-leader sequence from pre-tRNA to produce the mature 5'-terminus. It can also cleave other RNA substrates such as 4.5S RNA. The protein component plays an auxiliary but essential role in vivo by binding to the 5'-leader sequence and broadening the substrate specificity of the ribozyme. This chain is Ribonuclease P protein component, found in Clostridium botulinum (strain 657 / Type Ba4).